Here is a 464-residue protein sequence, read N- to C-terminus: Fumarate hydratase class II (464 aa).

Substrate is bound by residues 96 to 98 (SGT), 127 to 130 (HPND), 137 to 139 (SSN), and Thr185. The active-site Proton donor/acceptor is the His186. Residue Ser316 is part of the active site. Residues Ser317 and 322 to 324 (KVN) contribute to the substrate site.

This sequence belongs to the class-II fumarase/aspartase family. Fumarase subfamily. As to quaternary structure, homotetramer.

Its subcellular location is the cytoplasm. It catalyses the reaction (S)-malate = fumarate + H2O. It participates in carbohydrate metabolism; tricarboxylic acid cycle; (S)-malate from fumarate: step 1/1. In terms of biological role, involved in the TCA cycle. Catalyzes the stereospecific interconversion of fumarate to L-malate. This chain is Fumarate hydratase class II, found in Pseudomonas putida (strain ATCC 47054 / DSM 6125 / CFBP 8728 / NCIMB 11950 / KT2440).